Reading from the N-terminus, the 222-residue chain is uncharacterized protein (222 aa).

An N-terminal signal peptide occupies residues 1 to 20 (MRTTSFAKVAALCGLLALSG). A lipid anchor (N-palmitoyl cysteine) is attached at C21. C21 is lipidated: S-diacylglycerol cysteine.

The protein resides in the cell membrane. This is an uncharacterized protein from Escherichia coli O157:H7.